The chain runs to 122 residues: Large ribosomal subunit protein bL12 (122 aa).

Belongs to the bacterial ribosomal protein bL12 family. Homodimer. Part of the ribosomal stalk of the 50S ribosomal subunit. Forms a multimeric L10(L12)X complex, where L10 forms an elongated spine to which 2 to 4 L12 dimers bind in a sequential fashion. Binds GTP-bound translation factors.

Functionally, forms part of the ribosomal stalk which helps the ribosome interact with GTP-bound translation factors. Is thus essential for accurate translation. This chain is Large ribosomal subunit protein bL12, found in Deinococcus radiodurans (strain ATCC 13939 / DSM 20539 / JCM 16871 / CCUG 27074 / LMG 4051 / NBRC 15346 / NCIMB 9279 / VKM B-1422 / R1).